Reading from the N-terminus, the 219-residue chain is MOB kinase activator-like 1 (219 aa).

Zn(2+) contacts are provided by C79, C84, H161, and H166.

This sequence belongs to the MOB1/phocein family. Interacts with and activates trc and wts. Phosphorylated by wts/mats kinase complex. Activated by phosphorylation by Hippo (Hpo) kinase which increases its affinity and its ability to activate Warts (Wts) kinase. As to expression, ubiquitously expressed at low levels in developing tissues (at protein level).

Its subcellular location is the cytoplasm. It localises to the cytoskeleton. The protein localises to the microtubule organizing center. The protein resides in the centrosome. It is found in the nucleus. Its subcellular location is the cytosol. It localises to the cell membrane. Coactivator of Warts (Wts) kinase in the Hippo/SWH (Sav/Wts/Hpo)signaling pathway, a signaling pathway that plays a pivotal role in organ size control and tumor suppression by restricting proliferation and promoting apoptosis. The core of this pathway is composed of a kinase cascade wherein Hippo (Hpo), in complex with its regulatory protein Salvador (Sav), phosphorylates and activates Warts (Wts) in complex with its regulatory protein Mats, which in turn phosphorylates and inactivates the Yorkie (Yki)oncoprotein. The Hippo/SWH signaling pathway inhibits the activity of the transcriptional complex formed by Scalloped (sd) and Yki and the target genes of this pathway include cyclin-E (cycE), diap1 and bantam. Mats is essential for early development and is required for proper chromosomal segregation in developing embryos. The protein is MOB kinase activator-like 1 of Drosophila melanogaster (Fruit fly).